Here is a 106-residue protein sequence, read N- to C-terminus: Small ribosomal subunit protein uS10 (106 aa).

It belongs to the universal ribosomal protein uS10 family. Part of the 30S ribosomal subunit.

Involved in the binding of tRNA to the ribosomes. This is Small ribosomal subunit protein uS10 from Wolbachia pipientis subsp. Culex pipiens (strain wPip).